The sequence spans 393 residues: Probable N-acetyl-LL-diaminopimelate aminotransferase (393 aa).

Lysine 231 is modified (N6-(pyridoxal phosphate)lysine).

This sequence belongs to the class-I pyridoxal-phosphate-dependent aminotransferase family. In terms of assembly, homodimer. Pyridoxal 5'-phosphate is required as a cofactor.

Its subcellular location is the cytoplasm. The catalysed reaction is N-acetyl-(2S,6S)-2,6-diaminopimelate + 2-oxoglutarate = L-2-acetamido-6-oxoheptanedioate + L-glutamate. It participates in amino-acid biosynthesis; L-lysine biosynthesis via DAP pathway; LL-2,6-diaminopimelate from (S)-tetrahydrodipicolinate (acetylase route): step 2/3. Functionally, essential for murein biosynthesis. Probably catalyzes the conversion of L-2-acetamido-6-oxopimelate to N-acetyl-LL-2,6-diaminopimelate. The polypeptide is Probable N-acetyl-LL-diaminopimelate aminotransferase (Bacillus subtilis (strain 168)).